The sequence spans 326 residues: Glycolipid sulfotransferase MRA_1383 (326 aa).

A 3'-phosphoadenylyl sulfate-binding site is contributed by 40-45 (KSGLTW). His-97 functions as the Proton acceptor in the catalytic mechanism. 116 to 124 (RDPRDAAVS) lines the 3'-phosphoadenylyl sulfate pocket.

Belongs to the sulfotransferase 1 family.

Its function is as follows. Involved in the synthesis of cell wall sulfolipids. This Mycobacterium tuberculosis (strain ATCC 25177 / H37Ra) protein is Glycolipid sulfotransferase MRA_1383.